A 580-amino-acid polypeptide reads, in one-letter code: Membrane protein insertase YidC (580 aa).

A run of 6 helical transmembrane segments spans residues Ser-5–Pro-25, Lys-259–Ser-279, Gly-362–Ala-382, Leu-427–Phe-447, Ile-477–Val-497, and Ile-513–Leu-533.

The protein belongs to the OXA1/ALB3/YidC family. Type 1 subfamily. As to quaternary structure, interacts with the Sec translocase complex via SecD. Specifically interacts with transmembrane segments of nascent integral membrane proteins during membrane integration.

It is found in the cell inner membrane. Functionally, required for the insertion and/or proper folding and/or complex formation of integral membrane proteins into the membrane. Involved in integration of membrane proteins that insert both dependently and independently of the Sec translocase complex, as well as at least some lipoproteins. Aids folding of multispanning membrane proteins. The protein is Membrane protein insertase YidC of Chlorobium phaeovibrioides (strain DSM 265 / 1930) (Prosthecochloris vibrioformis (strain DSM 265)).